A 509-amino-acid polypeptide reads, in one-letter code: 3-isopropylmalate dehydratase large subunit, chloroplastic (509 aa).

Low complexity predominate over residues 1–24; it reads MASVISSSPFLCKSSSKSDLGISS. The disordered stretch occupies residues 1–25; that stretch reads MASVISSSPFLCKSSSKSDLGISSF. Residues 1 to 47 constitute a chloroplast transit peptide; sequence MASVISSSPFLCKSSSKSDLGISSFPKSSQISIHRCQKKSISRKIVS. 3 residues coordinate [4Fe-4S] cluster: Cys376, Cys445, and Cys448.

This sequence belongs to the aconitase/IPM isomerase family. As to quaternary structure, heterodimer of the large LEUC/IIL1 subunit and the small LEUD (SSU1, SSU2 or SSU3) subunits. The cofactor is [4Fe-4S] cluster. In terms of tissue distribution, expressed in roots, leaves, stems and flowers. Expressed at low levels in siliques.

It is found in the plastid. The protein localises to the chloroplast stroma. The enzyme catalyses (2R,3S)-3-isopropylmalate = (2S)-2-isopropylmalate. The catalysed reaction is a 2-(omega-methylsulfanyl)alkylmalate = a 2-(omega-methylsulfanyl)alkylmaleate + H2O. It catalyses the reaction 2-(3-methylsulfanyl)propylmalate = 2-(2-methylsulfanyl)propylmaleate + H2O. It carries out the reaction a 3-(omega-methylsulfanyl)alkylmalate = a 2-(omega-methylsulfanyl)alkylmaleate + H2O. The enzyme catalyses 2-(2-methylsulfanyl)ethylmalate = 2-(2-methylsulfanyl)ethylmaleate + H2O. The catalysed reaction is 3-(2-methylsulfanyl)ethylmalate = 2-(2-methylsulfanyl)ethylmaleate + H2O. It catalyses the reaction 3-(3-methylsulfanyl)propylmalate = 2-(2-methylsulfanyl)propylmaleate + H2O. It functions in the pathway amino-acid biosynthesis; L-leucine biosynthesis; L-leucine from 3-methyl-2-oxobutanoate: step 2/4. In terms of biological role, catalyzes the isomerization between 2-isopropylmalate and 3-isopropylmalate, via the formation of 2-isopropylmaleate. Functions in both the biosynthesis of leucine and in the methionine chain elongation pathway of aliphatic glucosinolate formation. The protein is 3-isopropylmalate dehydratase large subunit, chloroplastic of Arabidopsis thaliana (Mouse-ear cress).